Reading from the N-terminus, the 1409-residue chain is Copia protein (1409 aa).

The segment at 230–247 (VKCHHCGREGHIKKDCFH) adopts a CCHC-type zinc-finger fold. Residue aspartate 292 is the For protease activity of the active site. An Integrase catalytic domain is found at 476 to 644 (HIKRPLFVVH…TPYEMWHNKK (169 aa)). 2 disordered regions span residues 760-780 (SKES…QTEF) and 805-851 (NESK…NDGI). A compositionally biased stretch (basic and acidic residues) spans 827–841 (ESRESETAEHLKEIG).

This is Copia protein (GIP) from Drosophila melanogaster (Fruit fly).